The sequence spans 107 residues: ATP-dependent Clp protease adapter protein ClpS (107 aa).

It belongs to the ClpS family. In terms of assembly, binds to the N-terminal domain of the chaperone ClpA.

Involved in the modulation of the specificity of the ClpAP-mediated ATP-dependent protein degradation. This is ATP-dependent Clp protease adapter protein ClpS from Syntrophus aciditrophicus (strain SB).